We begin with the raw amino-acid sequence, 276 residues long: Phosphate import ATP-binding protein PstB 2 (276 aa).

The ABC transporter domain occupies 22-262 (MAAVNLTLGF…PKHAETARYV (241 aa)). Residue 54–61 (GPTGSGKT) participates in ATP binding.

It belongs to the ABC transporter superfamily. Phosphate importer (TC 3.A.1.7) family. As to quaternary structure, the complex is composed of two ATP-binding proteins (PstB), two transmembrane proteins (PstC and PstA) and a solute-binding protein (PstS).

The protein localises to the cell membrane. It catalyses the reaction phosphate(out) + ATP + H2O = ADP + 2 phosphate(in) + H(+). Part of the ABC transporter complex PstSACB involved in phosphate import. Responsible for energy coupling to the transport system. This is Phosphate import ATP-binding protein PstB 2 from Mycobacterium bovis (strain ATCC BAA-935 / AF2122/97).